Reading from the N-terminus, the 564-residue chain is Myb-like protein F (564 aa).

Disordered stretches follow at residues 22–107 (YNNS…NYNN), 122–203 (NYNN…YNGG), and 310–410 (NYNN…TKKY). The span at 23–79 (NNSNHYNDNNDNNNNNNNNNNDNNNNDNNNNNNNNNNSIINNESDNESNGTSNNYND) shows a compositional bias: low complexity. Residues 82-96 (NDNHHHHQDDEHHGN) show a composition bias toward basic and acidic residues. 4 stretches are compositionally biased toward low complexity: residues 97–107 (GNDNDNENYNN), 135–173 (EINS…NNSK), 193–203 (NNNNNNKYNGG), and 310–364 (NYNN…NSSN). Residues 365–409 (KEYKEKEYKEKEYKEKEFKESKDSSLKRKSSSDDDGDDSGRDTKK) show a composition bias toward basic and acidic residues. Positions 412 to 464 (PGRTVWTLEEEELYKEVFNHYGKNWKKIKTHFPDKSKSQVTSHGQYLIKINKL) constitute an SANT domain. Residues 519 to 556 (NNENTNDNNNHNNNNYNDNNNNSNNNNNFNNSNNNNTN) are compositionally biased toward low complexity. Positions 519-564 (NNENTNDNNNHNNNNYNDNNNNSNNNNNFNNSNNNNTNKFIDEDDD) are disordered.

It is found in the nucleus. In Dictyostelium discoideum (Social amoeba), this protein is Myb-like protein F (mybF).